A 134-amino-acid polypeptide reads, in one-letter code: Putative cytochrome c oxidase subunit 6b-like (134 aa).

Residues methionine 1–valine 61 are disordered. Basic and acidic residues-rich tracts occupy residues aspartate 7 to lysine 19 and alanine 44 to valine 61. Positions threonine 71–isoleucine 114 constitute a CHCH domain. A Cx9C motif motif is present at residues cysteine 74 to cysteine 84. 2 cysteine pairs are disulfide-bonded: cysteine 74/cysteine 106 and cysteine 84/cysteine 95. A Cx10C motif motif is present at residues cysteine 95–cysteine 106.

This sequence belongs to the cytochrome c oxidase subunit 6B (TC 3.D.4.8) family.

It is found in the mitochondrion. Its function is as follows. This protein is one of the nuclear-coded polypeptide chains of cytochrome c oxidase, the terminal oxidase in mitochondrial electron transport. This protein may be one of the heme-binding subunits of the oxidase. In Arabidopsis thaliana (Mouse-ear cress), this protein is Putative cytochrome c oxidase subunit 6b-like.